A 433-amino-acid chain; its full sequence is 3-phosphoshikimate 1-carboxyvinyltransferase (433 aa).

3-phosphoshikimate contacts are provided by K22, S23, and R27. Phosphoenolpyruvate is bound at residue K22. Phosphoenolpyruvate contacts are provided by G96 and R130. 7 residues coordinate 3-phosphoshikimate: S176, S177, Q178, S204, D319, N342, and K346. Q178 is a phosphoenolpyruvate binding site. The active-site Proton acceptor is D319. Phosphoenolpyruvate is bound by residues R350, R394, and K419.

The protein belongs to the EPSP synthase family. As to quaternary structure, monomer.

The protein localises to the cytoplasm. It carries out the reaction 3-phosphoshikimate + phosphoenolpyruvate = 5-O-(1-carboxyvinyl)-3-phosphoshikimate + phosphate. It participates in metabolic intermediate biosynthesis; chorismate biosynthesis; chorismate from D-erythrose 4-phosphate and phosphoenolpyruvate: step 6/7. Catalyzes the transfer of the enolpyruvyl moiety of phosphoenolpyruvate (PEP) to the 5-hydroxyl of shikimate-3-phosphate (S3P) to produce enolpyruvyl shikimate-3-phosphate and inorganic phosphate. This Actinobacillus succinogenes (strain ATCC 55618 / DSM 22257 / CCUG 43843 / 130Z) protein is 3-phosphoshikimate 1-carboxyvinyltransferase.